We begin with the raw amino-acid sequence, 743 residues long: Phosphoribosylformylglycinamidine synthase subunit PurL (743 aa).

Residue H50 is part of the active site. Y53 and K92 together coordinate ATP. E94 is a Mg(2+) binding site. Substrate-binding positions include 95 to 98 (SHNH) and R117. H96 (proton acceptor) is an active-site residue. D118 is a Mg(2+) binding site. Substrate is bound at residue Q241. D269 is a Mg(2+) binding site. A substrate-binding site is contributed by 313 to 315 (ESQ). Positions 494 and 531 each coordinate ATP. Position 532 (N532) interacts with Mg(2+). Position 534 (S534) interacts with substrate.

Belongs to the FGAMS family. In terms of assembly, monomer. Part of the FGAM synthase complex composed of 1 PurL, 1 PurQ and 2 PurS subunits.

It is found in the cytoplasm. The enzyme catalyses N(2)-formyl-N(1)-(5-phospho-beta-D-ribosyl)glycinamide + L-glutamine + ATP + H2O = 2-formamido-N(1)-(5-O-phospho-beta-D-ribosyl)acetamidine + L-glutamate + ADP + phosphate + H(+). It participates in purine metabolism; IMP biosynthesis via de novo pathway; 5-amino-1-(5-phospho-D-ribosyl)imidazole from N(2)-formyl-N(1)-(5-phospho-D-ribosyl)glycinamide: step 1/2. Functionally, part of the phosphoribosylformylglycinamidine synthase complex involved in the purines biosynthetic pathway. Catalyzes the ATP-dependent conversion of formylglycinamide ribonucleotide (FGAR) and glutamine to yield formylglycinamidine ribonucleotide (FGAM) and glutamate. The FGAM synthase complex is composed of three subunits. PurQ produces an ammonia molecule by converting glutamine to glutamate. PurL transfers the ammonia molecule to FGAR to form FGAM in an ATP-dependent manner. PurS interacts with PurQ and PurL and is thought to assist in the transfer of the ammonia molecule from PurQ to PurL. This is Phosphoribosylformylglycinamidine synthase subunit PurL from Sinorhizobium medicae (strain WSM419) (Ensifer medicae).